The sequence spans 382 residues: uncharacterized protein (382 aa).

Helical transmembrane passes span 14–34 (GLLLLTLAIAVLNTLVPLWLA), 45–65 (MVSSSYFTGNLVGTLLTGYLI), 79–99 (LVFAAGCLGLGLMIGFWSWMA), 102–122 (FVAGVGCAMIWVVVESALMCS), 131–151 (LLAAYMMIYYVGTFLGQLLVS), 157–177 (LMNVLPWVTALILAGILPLLF), 204–224 (LGVNGCIISGIVLGSLYGLMP), 236–256 (NIGFWMAVLVSAGIVGQWPIG), 265–285 (LLVLRVQIFVVILGSIAMLTH), 289–309 (APALFILGAAGFTLYPVAMAW), 325–345 (ALLLSYTIGSLLGPSFTAMLM), and 349–369 (SDNLLFIMIASVSFIYLLMLL).

It belongs to the major facilitator superfamily. YcaD (TC 2.A.1.26) family.

Its subcellular location is the cell inner membrane. This is an uncharacterized protein from Escherichia fergusonii (strain ATCC 35469 / DSM 13698 / CCUG 18766 / IAM 14443 / JCM 21226 / LMG 7866 / NBRC 102419 / NCTC 12128 / CDC 0568-73).